The sequence spans 365 residues: UDP-N-acetylglucosamine--N-acetylmuramyl-(pentapeptide) pyrophosphoryl-undecaprenol N-acetylglucosamine transferase (365 aa).

UDP-N-acetyl-alpha-D-glucosamine contacts are provided by residues 19–21 (TGG), Asn131, Arg170, Ser201, Ile255, 274–279 (ALTVTE), and Gln300.

It belongs to the glycosyltransferase 28 family. MurG subfamily.

The protein localises to the cell inner membrane. The catalysed reaction is di-trans,octa-cis-undecaprenyl diphospho-N-acetyl-alpha-D-muramoyl-L-alanyl-D-glutamyl-meso-2,6-diaminopimeloyl-D-alanyl-D-alanine + UDP-N-acetyl-alpha-D-glucosamine = di-trans,octa-cis-undecaprenyl diphospho-[N-acetyl-alpha-D-glucosaminyl-(1-&gt;4)]-N-acetyl-alpha-D-muramoyl-L-alanyl-D-glutamyl-meso-2,6-diaminopimeloyl-D-alanyl-D-alanine + UDP + H(+). Its pathway is cell wall biogenesis; peptidoglycan biosynthesis. Its function is as follows. Cell wall formation. Catalyzes the transfer of a GlcNAc subunit on undecaprenyl-pyrophosphoryl-MurNAc-pentapeptide (lipid intermediate I) to form undecaprenyl-pyrophosphoryl-MurNAc-(pentapeptide)GlcNAc (lipid intermediate II). In Acinetobacter baumannii (strain SDF), this protein is UDP-N-acetylglucosamine--N-acetylmuramyl-(pentapeptide) pyrophosphoryl-undecaprenol N-acetylglucosamine transferase.